The following is a 128-amino-acid chain: Regulator of ribonuclease activity B (128 aa).

It belongs to the RraB family. In terms of assembly, interacts with the C-terminal region of Rne.

It localises to the cytoplasm. Its function is as follows. Globally modulates RNA abundance by binding to RNase E (Rne) and regulating its endonucleolytic activity. Can modulate Rne action in a substrate-dependent manner by altering the composition of the degradosome. The sequence is that of Regulator of ribonuclease activity B from Idiomarina loihiensis (strain ATCC BAA-735 / DSM 15497 / L2-TR).